A 260-amino-acid chain; its full sequence is Snake venom serine protease KN14 (260 aa).

The first 18 residues, 1 to 18 (MVLIRVLANLLILQLSYA), serve as a signal peptide directing secretion. A propeptide spanning residues 19–24 (QKSSEL) is cleaved from the precursor. Residues 25 to 251 (VIGGDECNIN…HLDWIQSIIA (227 aa)) form the Peptidase S1 domain. Disulfide bonds link Cys-31-Cys-165, Cys-100-Cys-258, Cys-144-Cys-212, Cys-176-Cys-191, and Cys-202-Cys-227. His-67 (charge relay system) is an active-site residue. A glycan (N-linked (GlcNAc...) asparagine) is linked at Asn-105. Asp-112 (charge relay system) is an active-site residue. N-linked (GlcNAc...) asparagine glycosylation occurs at Asn-172. The Charge relay system role is filled by Ser-206. Residues Asn-213 and Asn-255 are each glycosylated (N-linked (GlcNAc...) asparagine).

Belongs to the peptidase S1 family. Snake venom subfamily. As to quaternary structure, monomer. As to expression, expressed by the venom gland.

The protein localises to the secreted. Its function is as follows. Snake venom serine protease that may act in the hemostasis system of the prey. In Trimeresurus stejnegeri (Chinese green tree viper), this protein is Snake venom serine protease KN14.